A 432-amino-acid chain; its full sequence is Cyclic GMP-AMP synthase-like receptor (432 aa).

ATP is bound by residues S59 and 71–73 (EFD). Residues E71, D73, and D205 each coordinate Mg(2+). GTP contacts are provided by residues D205 and 255 to 262 (KQTCSVLE). ATP is bound by residues 259–262 (SVLE), K284, and 303–307 (TYALK).

Belongs to the mab-21 family. Mg(2+) serves as cofactor. Mn(2+) is required as a cofactor.

It carries out the reaction GTP + ATP = 2',3'-cGAMP + 2 diphosphate. It catalyses the reaction GTP + ATP = pppGp(2'-5')A + diphosphate. The catalysed reaction is pppGp(2'-5')A = 2',3'-cGAMP + diphosphate. Its function is as follows. Nucleotidyltransferase that catalyzes the formation of cyclic GMP-AMP (2',3'-cGAMP) from ATP and GTP and plays a key role in innate immunity. Directly binds some unknown ligand, activating the nucleotidyltransferase activity, leading to synthesis of 2',3'-cGAMP, a second messenger that binds to and activates Sting, thereby triggering the immune response via activation of the NF-kappa-B transcription factor. This is Cyclic GMP-AMP synthase-like receptor from Pocillopora damicornis (Cauliflower coral).